We begin with the raw amino-acid sequence, 196 residues long: Recombination protein RecR (196 aa).

Residues 56–71 form a C4-type zinc finger; the sequence is CPVCGGLDSQQPCMIC. The 95-residue stretch at 78-172 folds into the Toprim domain; that stretch reads PLICVVETVA…SVTRLAQGVP (95 aa).

It belongs to the RecR family.

In terms of biological role, may play a role in DNA repair. It seems to be involved in an RecBC-independent recombinational process of DNA repair. It may act with RecF and RecO. The chain is Recombination protein RecR from Acidiphilium cryptum (strain JF-5).